A 476-amino-acid polypeptide reads, in one-letter code: Cytochrome c oxidase subunit 1 (476 aa).

Residues 19–39 (LYYLWFSFLFGIYGFLLSVIL) form a helical membrane-spanning segment. Glutamate 42 lines the Ca(2+) pocket. A run of 8 helical transmembrane segments spans residues 61 to 81 (MIFTVHGIIMIFFNIMPGLFG), 105 to 125 (ISLLLQPIAFILVILSTAAEF), 144 to 164 (LSPVAVDVIVIGLLVSGIASI), 194 to 214 (LIITSIMLLLTLPVLTGGVLM), 240 to 260 (LLWFFGHPEVYILILPAFGII), 278 to 298 (MILAMGCIAVLGSVVWVHHMY), 309 to 329 (FFTSTTILISIPTGTKVFNWL), and 345 to 365 (LLSLLFICTFTFGGTTGVILG). Histidine 66 is a Fe(II)-heme a binding site. Histidine 246 serves as a coordination point for Cu cation. The segment at residues 246 to 250 (HPEVY) is a cross-link (1'-histidyl-3'-tyrosine (His-Tyr)). O2 is bound at residue tyrosine 250. 2 residues coordinate Cu cation: histidine 295 and histidine 296. Histidine 374 and aspartate 375 together coordinate Mg(2+). 2 helical membrane-spanning segments follow: residues 379–399 (VIAHFHFVLSIGAIIALFTSV) and 415–435 (TIIVLWSILFFVGVVLTFLPM). Histidine 382 lines the heme a3 pocket. Position 384 (histidine 384) interacts with Fe(II)-heme a. Ca(2+) is bound at residue proline 448. The helical transmembrane segment at 455 to 475 (NGWNMICSIGSTMTLFGLLIF) threads the bilayer.

Belongs to the heme-copper respiratory oxidase family. As to quaternary structure, component of the cytochrome c oxidase (complex IV, CIV), a multisubunit enzyme composed of a catalytic core of 3 subunits and several supernumerary subunits. The complex exists as a monomer or a dimer and forms supercomplexes (SCs) in the inner mitochondrial membrane with ubiquinol-cytochrome c oxidoreductase (cytochrome b-c1 complex, complex III, CIII). It depends on heme as a cofactor. Requires Cu cation as cofactor.

The protein resides in the mitochondrion inner membrane. The catalysed reaction is 4 Fe(II)-[cytochrome c] + O2 + 8 H(+)(in) = 4 Fe(III)-[cytochrome c] + 2 H2O + 4 H(+)(out). Its pathway is energy metabolism; oxidative phosphorylation. In terms of biological role, component of the cytochrome c oxidase, the last enzyme in the mitochondrial electron transport chain which drives oxidative phosphorylation. The respiratory chain contains 3 multisubunit complexes succinate dehydrogenase (complex II, CII), ubiquinol-cytochrome c oxidoreductase (cytochrome b-c1 complex, complex III, CIII) and cytochrome c oxidase (complex IV, CIV), that cooperate to transfer electrons derived from NADH and succinate to molecular oxygen, creating an electrochemical gradient over the inner membrane that drives transmembrane transport and the ATP synthase. Cytochrome c oxidase is the component of the respiratory chain that catalyzes the reduction of oxygen to water. Electrons originating from reduced cytochrome c in the intermembrane space (IMS) are transferred via the dinuclear copper A center (CU(A)) of subunit 2 and heme A of subunit 1 to the active site in subunit 1, a binuclear center (BNC) formed by heme A3 and copper B (CU(B)). The BNC reduces molecular oxygen to 2 water molecules using 4 electrons from cytochrome c in the IMS and 4 protons from the mitochondrial matrix. This is Cytochrome c oxidase subunit 1 (COI) from Plasmodium chabaudi.